The following is a 348-amino-acid chain: D-alanine--D-alanine ligase (348 aa).

One can recognise an ATP-grasp domain in the interval 132 to 334; sequence KRVLESAGIP…YSDLIEELVS (203 aa). 162–217 is an ATP binding site; it reads LETLSFPIFVKPANMGSSVGISKAESIEGLREAIALALKYDSRILIEQGVVAREIE. Residues D288, E301, and N303 each coordinate Mg(2+).

It belongs to the D-alanine--D-alanine ligase family. Requires Mg(2+) as cofactor. Mn(2+) is required as a cofactor.

It is found in the cytoplasm. It catalyses the reaction 2 D-alanine + ATP = D-alanyl-D-alanine + ADP + phosphate + H(+). Its pathway is cell wall biogenesis; peptidoglycan biosynthesis. Its function is as follows. Cell wall formation. In Streptococcus uberis (strain ATCC BAA-854 / 0140J), this protein is D-alanine--D-alanine ligase.